Here is a 443-residue protein sequence, read N- to C-terminus: Protein IQ-DOMAIN 11 (443 aa).

The tract at residues 5-20 is calmodulin-binding; it reads KGLFTVLKRIFISEVN. Short sequence motifs (nuclear localization signal) lie at residues 11–18 and 27–34; these read LKRIFISE and RRKWTFWK. The tract at residues 44-65 is disordered; it reads ITAPPEHRTSHESHEEQKEEIV. Residues 48–64 are compositionally biased toward basic and acidic residues; that stretch reads PEHRTSHESHEEQKEEI. 2 IQ domains span residues 113–138 and 139–161; these read AATR…GIVK and LQAY…CLQS. A compositionally biased stretch (basic and acidic residues) spans 277–293; the sequence is FSSKTKPKDETLNEKQL. The interval 277 to 361 is disordered; that stretch reads FSSKTKPKDE…PRSFDTQSES (85 aa).

This sequence belongs to the IQD family. As to quaternary structure, binds to multiple calmodulin (CaM) in the presence of Ca(2+) and CaM-like proteins. In terms of tissue distribution, expressed in hypocotyls, cotyledons, leaves and petioles.

The protein localises to the nucleus. Its subcellular location is the cytoplasm. The protein resides in the cytoskeleton. May be involved in cooperative interactions with calmodulins or calmodulin-like proteins. Recruits calmodulin proteins to microtubules, thus being a potential scaffold in cellular signaling and trafficking. Regulates cell shape and elongation in aerial organs (i.e. epidermis pavement cells) probably by regulating cortical microtubules (MT) arrays orientation. May associate with nucleic acids and regulate gene expression at the transcriptional or post-transcriptional level. The sequence is that of Protein IQ-DOMAIN 11 from Arabidopsis thaliana (Mouse-ear cress).